Reading from the N-terminus, the 93-residue chain is Small ribosomal subunit protein bS16 (93 aa).

It belongs to the bacterial ribosomal protein bS16 family.

This is Small ribosomal subunit protein bS16 from Roseiflexus castenholzii (strain DSM 13941 / HLO8).